The sequence spans 262 residues: Alpha-tubulin N-acetyltransferase 1 (262 aa).

Residues 1-177 enclose the N-acetyltransferase domain; that stretch reads MQVDADLRPI…TNFVVFEELF (177 aa). Position 111–124 (111–124) interacts with acetyl-CoA; sequence FYVHFSCQRQGVGQ.

The protein belongs to the acetyltransferase ATAT1 family. As to expression, expressed solely in touch receptor neurons.

The catalysed reaction is L-lysyl-[alpha-tubulin] + acetyl-CoA = N(6)-acetyl-L-lysyl-[alpha-tubulin] + CoA + H(+). Functionally, specifically acetylates 'Lys-40' in alpha-tubulin/mec-12 on the lumenal side of microtubules. Promotes microtubule destabilization and accelerates microtubule dynamics; this activity may be independent of acetylation activity. Acetylates alpha-tubulin with a slow enzymatic rate, due to a catalytic site that is not optimized for acetyl transfer. Enters the microtubule through each end and diffuses quickly throughout the lumen of microtubules. Acetylates only long/old microtubules because of its slow acetylation rate since it does not have time to act on dynamically unstable microtubules before the enzyme is released. Required for the maintenance of touch receptor neurons and possibly other type of neurons involved in locomotion. Regulates the number and localization of mitochondria in mechanosensory neurons. Plays a role in axonal transport. The chain is Alpha-tubulin N-acetyltransferase 1 from Caenorhabditis elegans.